A 660-amino-acid polypeptide reads, in one-letter code: Genome-linked protein precursor (660 aa).

Residues 1-25 form the signal peptide; the sequence is MALLGIKLMTLVFAAWLSCCHSSSA. The next 2 membrane-spanning stretches (helical) occupy residues 131 to 151 and 165 to 185; these read AVGM…LVVY and AVCV…ISWI. The region spanning 224 to 416 is the Peptidase S39 domain; that stretch reads VEGYKPFIIP…GLTSPDFKFE (193 aa). Residues H272, D304, and S373 each act as for protease activity in the active site. Disordered regions lie at residues 463 to 490 and 595 to 660; these read EEES…GCPP and TKAP…AWVR.

Belongs to the peptidase S39B family.

The protein resides in the host membrane. Precursor from which the VPg molecule is probably released at the onset of the RNA synthesis. Essential for virus replication. This chain is Genome-linked protein precursor, found in Euphorbia pulcherrima (Poinsettia).